Consider the following 378-residue polypeptide: Chorismate synthase (378 aa).

The NADP(+) site is built by arginine 48 and arginine 54. Residues 125–127 (RSS), 238–239 (NA), glycine 278, 293–297 (KPTSS), and arginine 319 each bind FMN.

The protein belongs to the chorismate synthase family. Homotetramer. The cofactor is FMNH2.

It catalyses the reaction 5-O-(1-carboxyvinyl)-3-phosphoshikimate = chorismate + phosphate. The protein operates within metabolic intermediate biosynthesis; chorismate biosynthesis; chorismate from D-erythrose 4-phosphate and phosphoenolpyruvate: step 7/7. Its function is as follows. Catalyzes the anti-1,4-elimination of the C-3 phosphate and the C-6 proR hydrogen from 5-enolpyruvylshikimate-3-phosphate (EPSP) to yield chorismate, which is the branch point compound that serves as the starting substrate for the three terminal pathways of aromatic amino acid biosynthesis. This reaction introduces a second double bond into the aromatic ring system. The protein is Chorismate synthase of Azoarcus sp. (strain BH72).